The chain runs to 204 residues: General stress protein Ctc (204 aa).

The segment at 177-204 is disordered; the sequence is ILPPQQQEAAEVDEEESADAQPEGENEQ. Acidic residues predominate over residues 186-204; the sequence is AEVDEEESADAQPEGENEQ.

Belongs to the bacterial ribosomal protein bL25 family. CTC subfamily. Part of the ribosome (presumably the 50S subunit) under heat-stress but not control growth conditions. Binds 5S rRNA.

Not required for exponential growth; probably functions in vegetatively growing cells, maybe required for accurate translation under stress conditions. The chain is General stress protein Ctc from Bacillus subtilis (strain 168).